A 439-amino-acid chain; its full sequence is Paraneoplastic antigen-like protein 8A (439 aa).

The disordered stretch occupies residues 213–439 (ETPNNWNATE…RRATNESRKV (227 aa)). Over residues 231 to 249 (LVRRAGAKSRSRRKKQKKN) the composition is skewed to basic residues. Polar residues predominate over residues 403-419 (KAPQGQQPAEATASTSR). A compositionally biased stretch (basic and acidic residues) spans 423–439 (AKPEGSPRRATNESRKV).

Belongs to the PNMA family.

This is Paraneoplastic antigen-like protein 8A (PNMA8A) from Pongo abelii (Sumatran orangutan).